The following is a 229-amino-acid chain: Enolase-phosphatase E1 (229 aa).

Residues 207-229 are disordered; it reads RDPASHHPQVQRFDDIHPEQIPA. A compositionally biased stretch (basic and acidic residues) spans 218–229; it reads RFDDIHPEQIPA.

Belongs to the HAD-like hydrolase superfamily. MasA/MtnC family. Monomer. It depends on Mg(2+) as a cofactor.

It catalyses the reaction 5-methylsulfanyl-2,3-dioxopentyl phosphate + H2O = 1,2-dihydroxy-5-(methylsulfanyl)pent-1-en-3-one + phosphate. The protein operates within amino-acid biosynthesis; L-methionine biosynthesis via salvage pathway; L-methionine from S-methyl-5-thio-alpha-D-ribose 1-phosphate: step 3/6. Its pathway is amino-acid biosynthesis; L-methionine biosynthesis via salvage pathway; L-methionine from S-methyl-5-thio-alpha-D-ribose 1-phosphate: step 4/6. In terms of biological role, bifunctional enzyme that catalyzes the enolization of 2,3-diketo-5-methylthiopentyl-1-phosphate (DK-MTP-1-P) into the intermediate 2-hydroxy-3-keto-5-methylthiopentenyl-1-phosphate (HK-MTPenyl-1-P), which is then dephosphorylated to form the acireductone 1,2-dihydroxy-3-keto-5-methylthiopentene (DHK-MTPene). The protein is Enolase-phosphatase E1 of Klebsiella pneumoniae (strain 342).